A 283-amino-acid chain; its full sequence is Elongation factor Ts (283 aa).

An involved in Mg(2+) ion dislocation from EF-Tu region spans residues 80–83 (TDFV).

The protein belongs to the EF-Ts family.

It localises to the cytoplasm. Its function is as follows. Associates with the EF-Tu.GDP complex and induces the exchange of GDP to GTP. It remains bound to the aminoacyl-tRNA.EF-Tu.GTP complex up to the GTP hydrolysis stage on the ribosome. The protein is Elongation factor Ts of Haemophilus influenzae (strain 86-028NP).